Here is a 146-residue protein sequence, read N- to C-terminus: Hemoglobin subunit beta-1 (146 aa).

In terms of domain architecture, Globin spans 2–146 (EWTDQERATI…VVSALGKQYH (145 aa)). The heme b site is built by histidine 63 and histidine 92.

This sequence belongs to the globin family. Hb1 is a heterotetramer of two alpha-1 chains and two beta-1 chains. Hb2 is a heterotetramer of two alpha-2 chains and two beta-1 chains. HbC is a heterotetramer of two alpha-1 chains and two beta-2 chains. Red blood cells.

Its function is as follows. Involved in oxygen transport from gills to the various peripheral tissues. The chain is Hemoglobin subunit beta-1 from Eleginops maclovinus (Patagonian blennie).